The chain runs to 360 residues: MTKKTQVGLIFGGNSSEYEVSIVSCRNIYKAIDKEKFDVHPIWITNEGYFANEEESFKVLEDPSYQVKNPHKVHNISNLIELENLPEIDVFFPIVHGNLGEDGVLQGLFRLMNKPFVGDDVLAAAVTMDKEFTKILAQRVGVPVADWITIKRFEYDDKNNDKLDYEKVAEKLGRDMFVKPSNQGSSVGVSHVTNADEYAAALKEAFKYDDKVLVEETVPGTEVETAVLGNDKPIVAGVGQITNAKGSFYSYKNKYDDNSTSKLQIPADLPQEIIDTVRRNARKVYEVTECSGMARIDSMLTPGGKVVLTEVNALPGFTNISMYPKLFEEAGVPYTELITRLIEVGMERFDHKKTLLHKHD.

The ATP-grasp domain occupies 134–343 (KILAQRVGVP…YTELITRLIE (210 aa)). An ATP-binding site is contributed by 169–224 (AEKLGRDMFVKPSNQGSSVGVSHVTNADEYAAALKEAFKYDDKVLVEETVPGTEVE). Mg(2+) is bound by residues D297, E310, and N312.

The protein belongs to the D-alanine--D-alanine ligase family. It depends on Mg(2+) as a cofactor. Mn(2+) serves as cofactor.

It is found in the cytoplasm. It carries out the reaction 2 D-alanine + ATP = D-alanyl-D-alanine + ADP + phosphate + H(+). It participates in cell wall biogenesis; peptidoglycan biosynthesis. Functionally, cell wall formation. The protein is D-alanine--D-alanine ligase of Lactobacillus helveticus (strain DPC 4571).